The primary structure comprises 115 residues: Large ribosomal subunit protein bL19 (115 aa).

Belongs to the bacterial ribosomal protein bL19 family.

This protein is located at the 30S-50S ribosomal subunit interface and may play a role in the structure and function of the aminoacyl-tRNA binding site. The sequence is that of Large ribosomal subunit protein bL19 from Parabacteroides distasonis (strain ATCC 8503 / DSM 20701 / CIP 104284 / JCM 5825 / NCTC 11152).